A 206-amino-acid chain; its full sequence is Ribosomal RNA large subunit methyltransferase E (206 aa).

The S-adenosyl-L-methionine site is built by Gly-60, Trp-62, Asp-80, Asp-96, and Asp-121. The active-site Proton acceptor is the Lys-161.

It belongs to the class I-like SAM-binding methyltransferase superfamily. RNA methyltransferase RlmE family.

Its subcellular location is the cytoplasm. The enzyme catalyses uridine(2552) in 23S rRNA + S-adenosyl-L-methionine = 2'-O-methyluridine(2552) in 23S rRNA + S-adenosyl-L-homocysteine + H(+). Its function is as follows. Specifically methylates the uridine in position 2552 of 23S rRNA at the 2'-O position of the ribose in the fully assembled 50S ribosomal subunit. The chain is Ribosomal RNA large subunit methyltransferase E from Nitrosomonas eutropha (strain DSM 101675 / C91 / Nm57).